A 65-amino-acid chain; its full sequence is Crotamine CRO1 (65 aa).

Residues 1 to 22 (MKILYLLFAFLFLAFLSEPGNA) form the signal peptide. 3 disulfides stabilise this stretch: C26–C58, C33–C52, and C40–C59.

Belongs to the crotamine-myotoxin family. As to quaternary structure, monomer. Expressed by the venom gland.

Its subcellular location is the secreted. Cationic peptide that possesses multiple functions. It acts as a cell-penetrating peptide (CPP), and as a potent voltage-gated potassium channel (Kv) inhibitor. It exhibits antimicrobial activities, hind limb paralysis, and severe muscle necrosis by a non-enzymatic mechanism. This Crotalus durissus terrificus (South American rattlesnake) protein is Crotamine CRO1 (CRO1).